Here is a 150-residue protein sequence, read N- to C-terminus: Regulatory protein RecX (150 aa).

This sequence belongs to the RecX family.

The protein localises to the cytoplasm. Modulates RecA activity. This chain is Regulatory protein RecX, found in Acidithiobacillus ferrooxidans (strain ATCC 23270 / DSM 14882 / CIP 104768 / NCIMB 8455) (Ferrobacillus ferrooxidans (strain ATCC 23270)).